We begin with the raw amino-acid sequence, 413 residues long: Serine protease inhibitor A3L (413 aa).

A signal peptide spans 1-28 (MAFIAALGLLMAGICPAVLCDGTLGRDT). Phosphoserine is present on Ser-30. Residues Asn-102, Asn-182, Asn-220, and Asn-267 are each glycosylated (N-linked (GlcNAc...) asparagine). The RCL stretch occupies residues 365–389 (GTEATAATGVATVIRRQPRTLNFNR).

It belongs to the serpin family. N-glycosylated. As to expression, liver.

Its subcellular location is the secreted. In Rattus norvegicus (Rat), this protein is Serine protease inhibitor A3L (Serpina3l).